The primary structure comprises 303 residues: Small ribosomal subunit protein uS2 (303 aa).

The tract at residues 267–303 (AESLSMAEEPAPPSQRKGPASETAEPVAEPAVTESGS) is disordered.

The protein belongs to the universal ribosomal protein uS2 family.

The polypeptide is Small ribosomal subunit protein uS2 (Solibacter usitatus (strain Ellin6076)).